A 357-amino-acid polypeptide reads, in one-letter code: Guanine nucleotide-binding protein alpha-2 subunit (357 aa).

Gly-2 is lipidated: N-myristoyl glycine. Residue Cys-4 is the site of S-palmitoyl cysteine attachment. Residues Asn-30–Tyr-356 form the G-alpha domain. A G1 motif region spans residues Lys-33–Thr-46. GTP-binding residues include Glu-41, Ser-42, Gly-43, Lys-44, Ser-45, and Thr-46. Position 45 (Ser-45) interacts with Mg(2+). Ser-113 is subject to Phosphoserine. Asp-154, Leu-179, Thr-185, Gly-207, Asn-272, Lys-273, Asp-275, and Ala-328 together coordinate GTP. The segment at Asp-177 to Thr-185 is G2 motif. Thr-185 provides a ligand contact to Mg(2+). The tract at residues Phe-200 to Arg-209 is G3 motif. Positions Ile-268–Asp-275 are G4 motif. Positions Thr-326–Thr-331 are G5 motif.

The protein belongs to the G-alpha family. In terms of assembly, g proteins are composed of 3 units; alpha, beta and gamma. The alpha chain contains the guanine nucleotide binding site. Interacts with the RAP guanine nucleotide exchange factor glfB. Mg(2+) serves as cofactor. Ser-113 is transiently phosphorylated following stimulation with extracellular cAMP.

Guanine nucleotide-binding proteins (G proteins) are involved as modulators or transducers in various transmembrane signaling systems. G alpha-2 is required for the early aggregation process and most of the known cAMP receptor-mediated responses. Interacts with downstream effector gflB, a Rap guanine nucleotide exchange factor, to regulate the balance between Ras and Rap signaling at the leading edge of chemotaxing cells. The sequence is that of Guanine nucleotide-binding protein alpha-2 subunit (gpaB) from Dictyostelium discoideum (Social amoeba).